Consider the following 137-residue polypeptide: Small ribosomal subunit protein uS11 (137 aa).

The segment at 1–25 is disordered; the sequence is MADRRRGAARGGAARPRRRERKNIP. Residues 15–25 show a composition bias toward basic residues; it reads RPRRRERKNIP.

Belongs to the universal ribosomal protein uS11 family. As to quaternary structure, part of the 30S ribosomal subunit. Interacts with proteins S7 and S18. Binds to IF-3.

Functionally, located on the platform of the 30S subunit, it bridges several disparate RNA helices of the 16S rRNA. Forms part of the Shine-Dalgarno cleft in the 70S ribosome. The polypeptide is Small ribosomal subunit protein uS11 (Thermomicrobium roseum (strain ATCC 27502 / DSM 5159 / P-2)).